We begin with the raw amino-acid sequence, 658 residues long: Transcription factor cep-1 (658 aa).

Residues 238 to 428 (EEWLTFEVKK…RDWKNFCEKR (191 aa)) mediate DNA binding. Cysteine 319, histidine 322, cysteine 375, and cysteine 379 together coordinate Zn(2+). The disordered stretch occupies residues 450 to 477 (QSSLHSGPSSPEKVTDTSQMFQSTSSSS). A compositionally biased stretch (low complexity) spans 466 to 476 (TSQMFQSTSSS). The segment at 535–564 (QYGLQRQVKLSEKEYSKFVAFFAKEGENEI) is required for tertiary structure stability of the protein.

The protein belongs to the p53 family. As to quaternary structure, homodimer. Interacts (via C-terminus domain) with prmt-5; not methylated by prmt-5. Interacts with cbp-1 (via HAT domain); cep-1 transcriptional activity may be inhibited by interaction with methylated cbp-1. Component of a complex that contains prmt-5 and cbp-1. Interacts with ape-1; the interaction inhibits pro-apoptotic activity of cep-1. Zn(2+) is required as a cofactor. Post-translationally, phosphorylated in response to IR-induced DNA damage which is thought to be mediated by akt-1.

The protein resides in the nucleus. In terms of biological role, transcriptional activator that binds the same DNA consensus sequence as p53. Has a role in normal development to ensure proper meiotic chromosome segregation. Promotes apoptosis under conditions of cellular and genotoxic stress in response to DNA damage, hypoxia, or starvation. However, not required for DNA repair in response to UV-C or to regulate cell-cycle progression. Regulates germline apoptosis in response to DNA damage. Required for induction of ced-13 in response to DNA damage. Its pro-apoptotic activity is inhibited when bound to ape-1 in vitro. Regulates germline proliferation by activating phg-1. Regulates DNA damage-induced apoptosis by inducing transcription of the programmed cell death activator egl-1. Negatively regulates lifespan. In Caenorhabditis briggsae, this protein is Transcription factor cep-1.